Here is a 281-residue protein sequence, read N- to C-terminus: Stomatin-4 (281 aa).

Residues 28–48 traverse the membrane as a helical segment; that stretch reads WIITIISYLVVLFTLPLSAFF.

Belongs to the band 7/mec-2 family.

The protein localises to the membrane. In Caenorhabditis elegans, this protein is Stomatin-4 (sto-4).